Consider the following 420-residue polypeptide: Tubulin epsilon and delta complex protein 1 (420 aa).

Positions 276–340 (SEGGLGELES…AVQQELAALQ (65 aa)) form a coiled coil. Residues 342–351 (SWEQSSTPGQ) are compositionally biased toward polar residues. The tract at residues 342–369 (SWEQSSTPGQPQRPHRLVRSKDGAPRPQ) is disordered. Residues 377 to 409 (IRTLSAKEACLKKALHQLQRQCQQELARLAGAL) are a coiled coil.

Interacts with TEDC2. Found in a complex with TEDC1, TEDC2, TUBE1 and TUBD1.

Its subcellular location is the cell projection. It localises to the cilium. The protein resides in the cytoplasm. The protein localises to the cytoskeleton. It is found in the microtubule organizing center. Its subcellular location is the centrosome. It localises to the centriole. In terms of biological role, acts as a positive regulator of ciliary hedgehog signaling. Required for centriole stability. May play a role in counteracting perturbation of actin filaments, such as after treatment with the actin depolymerizing microbial metabolite Chivosazole F. The polypeptide is Tubulin epsilon and delta complex protein 1 (Mus musculus (Mouse)).